The following is a 180-amino-acid chain: Bifunctional protein PyrR 1 (180 aa).

Residues 39 to 40, 103 to 111, R136, and V160 contribute to the substrate site; these read TR and DDVLFTGRT. The PRPP-binding signature appears at 99–111; sequence VILVDDVLFTGRT.

It belongs to the purine/pyrimidine phosphoribosyltransferase family. PyrR subfamily. Homodimer and homohexamer; in equilibrium.

It carries out the reaction UMP + diphosphate = 5-phospho-alpha-D-ribose 1-diphosphate + uracil. Regulates transcriptional attenuation of the pyrimidine nucleotide (pyr) operon by binding in a uridine-dependent manner to specific sites on pyr mRNA. This disrupts an antiterminator hairpin in the RNA and favors formation of a downstream transcription terminator, leading to a reduced expression of downstream genes. In terms of biological role, also displays a weak uracil phosphoribosyltransferase activity which is not physiologically significant. This chain is Bifunctional protein PyrR 1 (pyrR1), found in Lactiplantibacillus plantarum (strain ATCC BAA-793 / NCIMB 8826 / WCFS1) (Lactobacillus plantarum).